A 207-amino-acid chain; its full sequence is Hepatic lectin (207 aa).

Met-1 carries the N-acetylmethionine modification. The Cytoplasmic portion of the chain corresponds to 1 to 23; it reads MDEERLSDNVRLYKGGSIRQGLR. The chain crosses the membrane as a helical; Signal-anchor for type II membrane protein span at residues 24–48; that stretch reads SFAAVYVLLALSFLLLTLLSSVSLA. Residues 49–207 are Extracellular-facing; it reads RIAALSSKLS…YYVCEKPLPK (159 aa). Asn-67 carries an N-linked (GlcNAc...) asparagine glycan. The C-type lectin domain occupies 77–203; that stretch reads PCGAQSRQWE…TYECYYVCEK (127 aa). 3 disulfide bridges follow: Cys-78–Cys-92, Cys-109–Cys-201, and Cys-179–Cys-193.

In terms of processing, some or all of the cysteines are involved in disulfide bonds.

The protein resides in the membrane. Its function is as follows. Hepatic lectin is a membrane receptor protein that recognizes and binds exposed N-acetylglucosamine moieties of plasma glycoproteins, thus mediating their clearance (from the circulation) and endocytosis. This Gallus gallus (Chicken) protein is Hepatic lectin.